Consider the following 420-residue polypeptide: Ribosome biogenesis protein WDR12 homolog (420 aa).

The interval 10 to 92 (VQVHLKTKQE…EDAIEIEYVE (83 aa)) is ubiquitin-like (UBL) domain. 7 WD repeats span residues 104–142 (LHDD…LTIS), 143–185 (GHTA…NAVD), 192–231 (GHER…GVEG), 250–288 (GHRE…IKTE), 290–329 (STNK…GSVV), 335–375 (GHNA…APLY), and 379–417 (GHGD…AEDT).

It belongs to the WD repeat WDR12/YTM1 family.

It localises to the nucleus. Its subcellular location is the nucleolus. The protein resides in the nucleoplasm. Functionally, required for maturation of ribosomal RNAs and formation of the large ribosomal subunit. The polypeptide is Ribosome biogenesis protein WDR12 homolog (Drosophila simulans (Fruit fly)).